A 1038-amino-acid polypeptide reads, in one-letter code: Bone morphogenetic protein receptor type-2 (1038 aa).

A signal peptide spans 1 to 26 (MTSSLHRPFRVPWLLWAVLLVSTTAA). Topologically, residues 27-150 (SQNQERLCAF…PPHSFNRDET (124 aa)) are extracellular. Intrachain disulfides connect Cys34/Cys66, Cys60/Cys84, Cys94/Cys117, Cys99/Cys116, and Cys118/Cys123. Asn55 carries N-linked (GlcNAc...) asparagine glycosylation. Asn110 is a glycosylation site (N-linked (GlcNAc...) asparagine). N-linked (GlcNAc...) asparagine glycosylation occurs at Asn126. Residues 151-171 (IIIALASVSVLAVLIVALCFG) traverse the membrane as a helical segment. The Cytoplasmic segment spans residues 172–1038 (YRMLTGDRKQ…VSKDIGMNCL (867 aa)). Residues 203–504 (LKLLELIGRG…QCAEERMAEL (302 aa)) enclose the Protein kinase domain. ATP is bound by residues 209–217 (IGRGRYGAV), Lys230, and 280–282 (EYY). Residue Asp333 is the Proton acceptor of the active site. ATP is bound by residues 337–338 (RN) and Asp351. Phosphothreonine is present on Thr379. Residue Ser586 is modified to Phosphoserine. Residues 593 to 626 (QAQARIPSPETSVTSLSTNTTTTNTTGLTPSTGM) form a disordered region. The segment covering 603–626 (TSVTSLSTNTTTTNTTGLTPSTGM) has biased composition (low complexity). Phosphoserine is present on residues Ser680 and Ser681. The tract at residues 746 to 769 (PKQQNLPKRPTSLPLNTKNSTKEP) is disordered. Position 843 is a phosphoserine (Ser843). Residues 872-896 (RREQQAGHDEGVLDRLVDRRERPLE) are compositionally biased toward basic and acidic residues. A disordered region spans residues 872-974 (RREQQAGHDE…SGSGEKIKRR (103 aa)). Composition is skewed to polar residues over residues 909-924 (PCSE…TSTA) and 937-964 (RPNS…QDGK).

Belongs to the protein kinase superfamily. TKL Ser/Thr protein kinase family. TGFB receptor subfamily. As to quaternary structure, interacts with GDF5. Interacts with BMP4. Interacts with SCUBE3. Interacts with TSC22D1/TSC-22. Interacts with activin A/INHBA. Requires Mg(2+) as cofactor. Mn(2+) serves as cofactor.

The protein localises to the cell membrane. It catalyses the reaction L-threonyl-[receptor-protein] + ATP = O-phospho-L-threonyl-[receptor-protein] + ADP + H(+). It carries out the reaction L-seryl-[receptor-protein] + ATP = O-phospho-L-seryl-[receptor-protein] + ADP + H(+). Its function is as follows. On ligand binding, forms a receptor complex consisting of two type II and two type I transmembrane serine/threonine kinases. Type II receptors phosphorylate and activate type I receptors which autophosphorylate, then bind and activate SMAD transcriptional regulators. Can also mediate signaling through the activation of the p38MAPK cascade. Binds to BMP7, BMP2 and, less efficiently, BMP4. Binding is weak but enhanced by the presence of type I receptors for BMPs. Mediates induction of adipogenesis by GDF6. Promotes signaling also by binding to activin A/INHBA. This is Bone morphogenetic protein receptor type-2 (Bmpr2) from Mus musculus (Mouse).